The following is a 325-amino-acid chain: Aldo-keto reductase family 1 member D1 (325 aa).

NADP(+) contacts are provided by residues 22-26 (GLGTY) and D52. Residue Y26 participates in substrate binding. Residues Y57, W88, E119, and Y131 each coordinate substrate. The active-site Proton donor is the Y57. NADP(+)-binding positions include 168–169 (SN), Q192, and 218–223 (HSPLGT). S228 is subject to Phosphoserine. A substrate-binding site is contributed by W229. 272–282 (KSFTPERIKEN) lines the NADP(+) pocket.

The protein belongs to the aldo/keto reductase family.

The protein localises to the cytoplasm. It carries out the reaction 5beta-cholestan-3-one + NADP(+) = cholest-4-en-3-one + NADPH + H(+). It catalyses the reaction 4,5beta-dihydrocortisone + NADP(+) = cortisone + NADPH + H(+). The catalysed reaction is cortisol + NADPH + H(+) = 5beta-dihydrocortisol + NADP(+). The enzyme catalyses corticosterone + NADPH + H(+) = 5beta-dihydrocorticosterone + NADP(+). It carries out the reaction 7alpha,12alpha-dihydroxycholest-4-en-3-one + NADPH + H(+) = 7alpha,12alpha-dihydroxy-5beta-cholestan-3-one + NADP(+). It catalyses the reaction 7alpha-hydroxycholest-4-en-3-one + NADPH + H(+) = 7alpha-hydroxy-5beta-cholestan-3-one + NADP(+). The catalysed reaction is epitestosterone + NADPH + H(+) = 5beta-dihydroepitestosterone + NADP(+). The enzyme catalyses androst-4-ene-3,17-dione + NADPH + H(+) = 5beta-androstane-3,17-dione + NADP(+). It carries out the reaction progesterone + NADPH + H(+) = 5beta-pregnan-3,20-dione + NADP(+). It catalyses the reaction 21-hydroxyprogesterone + NADPH + H(+) = 5beta-dihydrodeoxycorticosterone + NADP(+). The catalysed reaction is aldosterone + NADPH + H(+) = 5beta-dihydroaldosterone + NADP(+). The enzyme catalyses 17beta-hydroxyandrosta-1,4-dien-3-one + NADPH + H(+) = 17beta-hydroxy-5beta-androst-1-en-3-one + NADP(+). It carries out the reaction 17beta-hydroxyestr-4-en-3-one + NADPH + H(+) = 17beta-hydroxy-5beta-estran-3-one + NADP(+). It catalyses the reaction 5beta-dihydrotestosterone + NADP(+) = testosterone + NADPH + H(+). The catalysed reaction is androst-4-ene-3,11,17-trione + NADPH + H(+) = 17beta-hydroxyandrost-4-ene-3,11-dione + NADP(+). Its activity is regulated as follows. Subject to inhibition by high substrate concentrations. Inhibited by testosterone concentrations above 10 uM. Inhibited by the primary and secondary bile acids chenodeoxycholic acid and ursodeoxycholic acid. In terms of biological role, catalyzes the stereospecific NADPH-dependent reduction of the C4-C5 double bond of bile acid intermediates and steroid hormones carrying a delta(4)-3-one structure to yield an A/B cis-ring junction. This cis-configuration is crucial for bile acid biosynthesis and plays important roles in steroid metabolism. Capable of reducing a broad range of delta-(4)-3-ketosteroids from C18 (such as, 17beta-hydroxyestr-4-en-3-one) to C27 (such as, 7alpha-hydroxycholest-4-en-3-one). This is Aldo-keto reductase family 1 member D1 (Akr1d1) from Mus musculus (Mouse).